We begin with the raw amino-acid sequence, 1102 residues long: MSSFRLQSDHMQSDASLMTSVRKATSIDETAPKRKHVRSCIIFTWDHHTARPFWTAIKVQPLLANEVQTFKALITIHRVLQEGHKSALVDSQSEKGWLKTCERQYDGESSPKGYSDLIRDYVDYLLDKLSFHAQHPEFNGTFEYKEYISLRQVDDPNEGYETVYDMMNLQDHIDEFQKQLFSNFKRSNKNECRIAALVPLVQESYGIYRFLTSMLRALYSTVDAPETLEPLKHRYKSQHHRLRQFYADCSNLRYLTSLISVPRLPHDPPDLEGDDNIPDLPKRPASIAPQPTGASTIAPQPTGTSPSPPVEMNFPDTSDITPAYSEPEPIQDFWSDPTLDQQLAAQQAAQQAAQQQAELAAQQAAAQQAQLAAQQAAEMERQRMAAQQHQQALEAIQMAQAEQQRIAQEQLAQQQFQMQTQGQLAELEQQLLATRGQLEQSNVLLNQYDARVRTLENELSQAGVNLQEQIHQNDDLIESLKNQILTWKNKYEALAKLYTQLRQEHLDLLSKYKQIQLKASSAQEAIDKKEKMEREMKNKNLELADMILERDRARHELETMHRSQRDKQESTERELRLLQEKAASLERNKSSEVSNLLSRYNTEVAHLEDALHSKDRELANLGVELKSTENRYRQLLQEKEEELEIQKAAVDESLLQLSKLQLDRNDIDQAMDTQIDELLKSQLEKLDDIVDSVLATGIQRLDTSLYELDSPMHAGNQYATPEFILSTIENASNNATDFSTAFNNYFADGPNADHSEVINGVNLFSTAIYEVANNAKGLSRTTGDDQGSDRFVGLSRDLVNMAKRFLSSLFSVNTRKMDVNVKTDLVIGENIELQRYLQQLTQYSEKFLNKESENTVGLLNAPGENIEELVDNQLAETAQAIQQAILRLQNIAAKPKDDSLSPSELQVHDSLLSASIAITEAIARLIKAATASQAEIVAQGRGSSSRGAFYKKHNRWTEGLISAAKAVARATTTLIETADGVVNGTSSFEHLIVACNGVSAATAQLVAASRVKANFASKVQDHLEDAAKAVTEACKALVRQVESVALKAKEVQHEDFSSLGVHEYRRKEIEQQVQILKLENDLVAARRRLFDMRKTSYHVAEE.

The 131-residue stretch at 9-139 (DHMQSDASLM…SFHAQHPEFN (131 aa)) folds into the ENTH domain. The disordered stretch occupies residues 265–334 (PHDPPDLEGD…SEPEPIQDFW (70 aa)). Positions 292 to 305 (TGASTIAPQPTGTS) are enriched in polar residues. A coiled-coil region spans residues 338–661 (TLDQQLAAQQ…ESLLQLSKLQ (324 aa)). One can recognise an I/LWEQ domain in the interval 858–1100 (LLNAPGENIE…DMRKTSYHVA (243 aa)).

It belongs to the SLA2 family.

Its subcellular location is the cytoplasm. It localises to the cytoskeleton. Required for cellular morphogenesis and polarization of the cortical cytoskeleton. Required for establishment of new polarized growth zones where it acts in actin organization. Involved plasma membrane internalization and is essential for fluid-phase endocytosis. In Schizosaccharomyces pombe (strain 972 / ATCC 24843) (Fission yeast), this protein is Endocytosis protein end4 (end4).